Consider the following 445-residue polypeptide: Phosphoglucosamine mutase (445 aa).

The active-site Phosphoserine intermediate is the S102. The Mg(2+) site is built by S102, D240, D242, and D244. S102 is subject to Phosphoserine.

Belongs to the phosphohexose mutase family. It depends on Mg(2+) as a cofactor. Post-translationally, activated by phosphorylation.

The catalysed reaction is alpha-D-glucosamine 1-phosphate = D-glucosamine 6-phosphate. Functionally, catalyzes the conversion of glucosamine-6-phosphate to glucosamine-1-phosphate. This chain is Phosphoglucosamine mutase, found in Mycobacterium sp. (strain JLS).